Reading from the N-terminus, the 375-residue chain is Chaperone protein DnaJ (375 aa).

Positions 5-69 (DYYEVLGVSK…QKRAQYDQFG (65 aa)) constitute a J domain. The segment at 132–214 (GKETIIEIPR…CGGTGKVKKR (83 aa)) adopts a CR-type zinc-finger fold. The Zn(2+) site is built by Cys-145, Cys-148, Cys-162, Cys-165, Cys-188, Cys-191, Cys-202, and Cys-205. CXXCXGXG motif repeat units follow at residues 145-152 (CETCKGSG), 162-169 (CSHCGGSG), 188-195 (CHHCEGTG), and 202-209 (CSDCGGTG).

This sequence belongs to the DnaJ family. In terms of assembly, homodimer. Zn(2+) is required as a cofactor.

The protein localises to the cytoplasm. In terms of biological role, participates actively in the response to hyperosmotic and heat shock by preventing the aggregation of stress-denatured proteins and by disaggregating proteins, also in an autonomous, DnaK-independent fashion. Unfolded proteins bind initially to DnaJ; upon interaction with the DnaJ-bound protein, DnaK hydrolyzes its bound ATP, resulting in the formation of a stable complex. GrpE releases ADP from DnaK; ATP binding to DnaK triggers the release of the substrate protein, thus completing the reaction cycle. Several rounds of ATP-dependent interactions between DnaJ, DnaK and GrpE are required for fully efficient folding. Also involved, together with DnaK and GrpE, in the DNA replication of plasmids through activation of initiation proteins. The polypeptide is Chaperone protein DnaJ (Bacillus velezensis (strain DSM 23117 / BGSC 10A6 / LMG 26770 / FZB42) (Bacillus amyloliquefaciens subsp. plantarum)).